The primary structure comprises 314 residues: (-)-isopiperitenone reductase (314 aa).

Residue V10–I33 participates in NADP(+) binding. S182 serves as a coordination point for substrate.

Belongs to the short-chain dehydrogenases/reductases (SDR) family.

Its subcellular location is the cytoplasm. The catalysed reaction is (2R,5R)-isopulegone + NADP(+) = (6R)-isopiperitenone + NADPH + H(+). It functions in the pathway secondary metabolite biosynthesis; terpenoid biosynthesis. Its function is as follows. Monoterpene synthase that catalyzes the specific reduction of the 1(2)-double bond of (-)-isopiperitenone to produce (+)-cis-isopulegone. Does not catalyze the reverse reaction. Unable to reduce (+)-pulegone, (+)-cis-isopulegone, (-)-menthone or the 1,2-double bond of (-)-carvone. Able to utilize NADH with 20% the efficiency of NADPH. The polypeptide is (-)-isopiperitenone reductase (Mentha piperita (Peppermint)).